The primary structure comprises 432 residues: Enolase (432 aa).

Gln163 contributes to the (2R)-2-phosphoglycerate binding site. The active-site Proton donor is Glu205. Mg(2+)-binding residues include Asp242, Glu289, and Asp316. (2R)-2-phosphoglycerate is bound by residues Lys341, Arg370, Ser371, and Lys392. The Proton acceptor role is filled by Lys341.

Belongs to the enolase family. It depends on Mg(2+) as a cofactor. Probably phosphorylated.

Its subcellular location is the cytoplasm. It localises to the secreted. The protein resides in the cell surface. It catalyses the reaction (2R)-2-phosphoglycerate = phosphoenolpyruvate + H2O. The protein operates within carbohydrate degradation; glycolysis; pyruvate from D-glyceraldehyde 3-phosphate: step 4/5. Catalyzes the reversible conversion of 2-phosphoglycerate (2-PG) into phosphoenolpyruvate (PEP). It is essential for the degradation of carbohydrates via glycolysis. In terms of biological role, 'Moonlights' as a plasminogen receptor. Binds plasminogen and human salivary mucin MG2 when expressed on the bacterial cell surface, potentially allowing the bacterium to acquire surface-associated proteolytic activity that may help the dissemination through oral tissues and entrance into the blood stream. In Streptococcus mutans serotype c (strain ATCC 700610 / UA159), this protein is Enolase.